Consider the following 102-residue polypeptide: Large ribosomal subunit protein mL63 (102 aa).

The protein belongs to the mitochondrion-specific ribosomal protein mL63 family.

It localises to the mitochondrion. The protein is Large ribosomal subunit protein mL63 (MRPL57) of Bos taurus (Bovine).